Here is a 221-residue protein sequence, read N- to C-terminus: Endonuclease V (221 aa).

Mg(2+)-binding residues include Asp-44 and Asp-112.

It belongs to the endonuclease V family. The cofactor is Mg(2+).

It localises to the cytoplasm. The catalysed reaction is Endonucleolytic cleavage at apurinic or apyrimidinic sites to products with a 5'-phosphate.. Its function is as follows. DNA repair enzyme involved in the repair of deaminated bases. Selectively cleaves double-stranded DNA at the second phosphodiester bond 3' to a deoxyinosine leaving behind the intact lesion on the nicked DNA. This is Endonuclease V from Trichormus variabilis (strain ATCC 29413 / PCC 7937) (Anabaena variabilis).